The primary structure comprises 1508 residues: uncharacterized protein (1508 aa).

Residues A149–T267 adopt a coiled-coil conformation. 5 disordered regions span residues E248–E268, S345–S403, F536–L575, G725–H754, and E868–W916. Residues E868–G881 show a composition bias toward basic and acidic residues. The stretch at I972 to A1034 forms a coiled coil. 2 disordered regions span residues L1158 to R1186 and K1204 to P1246. A compositionally biased stretch (polar residues) spans T1163–S1172. Over residues K1204 to P1215 the composition is skewed to basic and acidic residues. Positions A1220–N1230 are enriched in polar residues. A coiled-coil region spans residues H1271–A1302.

This is an uncharacterized protein from Homo sapiens (Human).